The primary structure comprises 134 residues: Translation initiation factor 2 subunit beta (134 aa).

Belongs to the eIF-2-beta/eIF-5 family. As to quaternary structure, heterotrimer composed of an alpha, a beta and a gamma chain.

Its function is as follows. eIF-2 functions in the early steps of protein synthesis by forming a ternary complex with GTP and initiator tRNA. This is Translation initiation factor 2 subunit beta from Pyrobaculum arsenaticum (strain DSM 13514 / JCM 11321 / PZ6).